The following is a 189-amino-acid chain: WASH complex subunit homolog 3 (189 aa).

The stretch at 35–74 forms a coiled coil; it reads MTEMLNNFGNKMEDILEKAEQSLDTADRKLRLMESKLAGM. Disordered regions lie at residues 76-101 and 150-189; these read LEDKSTTATPSSAPEIDEIHESNPSS and SEGVDPSILKRGDEPSRPQAQTSRNYESSGESTASFSDSD. Residues 150 to 165 show a composition bias toward basic and acidic residues; sequence SEGVDPSILKRGDEPS. Positions 167-189 are enriched in polar residues; the sequence is PQAQTSRNYESSGESTASFSDSD. A Phosphothreonine modification is found at Thr-182.

It belongs to the CCDC53 family. In terms of assembly, probable component of the WASH complex. Component of the DHIC (ddl-1-containing hsf-1 inhibitory complex), which contains at least ddl-1, ddl-2, hsb-1 and hsf-1. Within the complex, interacts with ddl-2. Within the complex, interacts with hsb-1. Within the complex, interacts with hsf-1. Formation of the DHIC may be dependent upon the Insulin/IGF-1-like signaling (IIS) mediated pathway. Post-translationally, phosphorylated. Phosphorylation on Thr-182 may promote DHIC complex dissociation and consequently the activation of heat-shock transcription factor hsf-1. Phosphorylation is modulated by the Insulin/IGF-1-like signaling (IIS) mediated pathway. As to expression, expressed in pharynx, intestine, body wall muscles, vulva muscles, spermatheca, and several head and tail neurons.

Its function is as follows. Acts as a component of the WASH core complex that functions as a nucleation-promoting factor (NPF) at the surface of endosomes, where it recruits and activates the Arp2/3 complex to induce actin polymerization, playing a key role in the fission of tubules that serve as transport intermediates during endosome sorting. Acts as a component of the DHIC (ddl-1-containing hsf-1 inhibitory complex) which modulates lifespan by sequestering the heat-shock transcription factor hsf-1 to negatively regulate its binding to DNA and its transcriptional activity. This Caenorhabditis elegans protein is WASH complex subunit homolog 3 (ddl-1).